Here is a 61-residue protein sequence, read N- to C-terminus: UPF0434 protein Avin_14770 (61 aa).

Belongs to the UPF0434 family.

The protein is UPF0434 protein Avin_14770 of Azotobacter vinelandii (strain DJ / ATCC BAA-1303).